The sequence spans 860 residues: Pentatricopeptide repeat-containing protein At2g40720 (860 aa).

PPR repeat units follow at residues 59-93, 94-124, 132-166, 167-203, 204-234, 236-270, 271-305, 306-340, 341-371, 372-406, 407-437, 438-472, 475-509, 510-540, 541-575, 576-610, 611-641, 642-676, 677-707, and 713-743; these read SVFTFPSLLKACSALTNLSYGKTIHGSVVVLGWRY, DPFIATSLVNMYVKCGFLDYAVQVFDGWSQS, DVTVWNSMIDGYFKFRRFKEGVGCFRRMLVFGVRP, DAFSLSIVVSVMCKEGNFRREEGKQIHGFMLRNSLDT, DSFLKTALIDMYFKFGLSIDAWRVFVEIEDK, NVVLWNVMIVGFGGSGICESSLDLYMLAKNNSVKL, VSTSFTGALGACSQSENSGFGRQIHCDVVKMGLHN, DPYVCTSLLSMYSKCGMVGEAETVFSCVVDKRLEI, WNAMVAAYAENDYGYSALDLFGFMRQKSVLP, DSFTLSNVISCCSVLGLYNYGKSVHAELFKRPIQS, TSTIESALLTLYSKCGCDPDAYLVFKSMEEK, DMVAWGSLISGLCKNGKFKEALKVFGDMKDDDDSL, DSDIMTSVTNACAGLEALRFGLQVHGSMIKTGLVL, NVFVGSSLIDLYSKCGLPEMALKVFTSMSTE, NMVAWNSMISCYSRNNLPELSIDLFNLMLSQGIFP, DSVSITSVLVAISSTASLLKGKSLHGYTLRLGIPS, DTHLKNALIDMYVKCGFSKYAENIFKKMQHK, SLITWNLMIYGYGSHGDCITALSLFDEMKKAGESP, DDVTFLSLISACNHSGFVEEGKNIFEFMKQD, and NMEHYANMVDLLGRAGLLEEAYSFIKAMPIE. Positions 748–823 are type E motif; the sequence is IWLCLLSASR…QPGCSWIEVS (76 aa). The type E(+) motif stretch occupies residues 824 to 854; that stretch reads DRTNVFFSGGSSSPMKAEIFNVLNRLKSNMV.

It belongs to the PPR family. PCMP-E subfamily.

The sequence is that of Pentatricopeptide repeat-containing protein At2g40720 (PCMP-E26) from Arabidopsis thaliana (Mouse-ear cress).